A 149-amino-acid chain; its full sequence is UPF0179 protein rrnAC1064 (149 aa).

This sequence belongs to the UPF0179 family.

This chain is UPF0179 protein rrnAC1064, found in Haloarcula marismortui (strain ATCC 43049 / DSM 3752 / JCM 8966 / VKM B-1809) (Halobacterium marismortui).